The primary structure comprises 236 residues: Methylosome subunit pICln (236 aa).

Residues 1–20 (MSFLKSFPPPGPTEGLRHQQ) are disordered. N-acetylserine is present on S2. Residues S101, S143, S192, S194, S197, and S209 each carry the phosphoserine modification. Phosphothreonine is present on T222.

This sequence belongs to the pICln (TC 1.A.47) family. Component of the methylosome, a 20S complex containing at least PRMT5/SKB1, WDR77/MEP50 and CLNS1A/pICln. May mediate SNRPD1 and SNRPD3 methylation. Forms a 6S pICln-Sm complex composed of CLNS1A/pICln, SNRPD1, SNRPD2, SNRPE, SNRPF and SNRPG; ring-like structure where CLNS1A/pICln mimics additional Sm proteins and which is unable to assemble into the core snRNP. Interacts with LSM10 and LSM11. Widely distributed but expressed more abundantly in nonpigmented ciliary epithelial cells than in pigmented ones.

The protein localises to the cytoplasm. Its subcellular location is the cytosol. It is found in the nucleus. The protein resides in the cytoskeleton. Functionally, involved in both the assembly of spliceosomal snRNPs and the methylation of Sm proteins. Chaperone that regulates the assembly of spliceosomal U1, U2, U4 and U5 small nuclear ribonucleoproteins (snRNPs), the building blocks of the spliceosome, and thereby plays an important role in the splicing of cellular pre-mRNAs. Most spliceosomal snRNPs contain a common set of Sm proteins SNRPB, SNRPD1, SNRPD2, SNRPD3, SNRPE, SNRPF and SNRPG that assemble in a heptameric protein ring on the Sm site of the small nuclear RNA to form the core snRNP (Sm core). In the cytosol, the Sm proteins SNRPD1, SNRPD2, SNRPE, SNRPF and SNRPG are trapped in an inactive 6S pICln-Sm complex by the chaperone CLNS1A that controls the assembly of the core snRNP. Dissociation by the SMN complex of CLNS1A from the trapped Sm proteins and their transfer to an SMN-Sm complex triggers the assembly of core snRNPs and their transport to the nucleus. The sequence is that of Methylosome subunit pICln (CLNS1A) from Oryctolagus cuniculus (Rabbit).